The sequence spans 367 residues: UDP-N-acetylglucosamine--N-acetylmuramyl-(pentapeptide) pyrophosphoryl-undecaprenol N-acetylglucosamine transferase (367 aa).

Residues 15 to 17 (TGG), asparagine 127, arginine 163, serine 191, isoleucine 249, and glutamine 294 each bind UDP-N-acetyl-alpha-D-glucosamine.

The protein belongs to the glycosyltransferase 28 family. MurG subfamily.

The protein resides in the cell inner membrane. It carries out the reaction di-trans,octa-cis-undecaprenyl diphospho-N-acetyl-alpha-D-muramoyl-L-alanyl-D-glutamyl-meso-2,6-diaminopimeloyl-D-alanyl-D-alanine + UDP-N-acetyl-alpha-D-glucosamine = di-trans,octa-cis-undecaprenyl diphospho-[N-acetyl-alpha-D-glucosaminyl-(1-&gt;4)]-N-acetyl-alpha-D-muramoyl-L-alanyl-D-glutamyl-meso-2,6-diaminopimeloyl-D-alanyl-D-alanine + UDP + H(+). It participates in cell wall biogenesis; peptidoglycan biosynthesis. Functionally, cell wall formation. Catalyzes the transfer of a GlcNAc subunit on undecaprenyl-pyrophosphoryl-MurNAc-pentapeptide (lipid intermediate I) to form undecaprenyl-pyrophosphoryl-MurNAc-(pentapeptide)GlcNAc (lipid intermediate II). The polypeptide is UDP-N-acetylglucosamine--N-acetylmuramyl-(pentapeptide) pyrophosphoryl-undecaprenol N-acetylglucosamine transferase (Burkholderia lata (strain ATCC 17760 / DSM 23089 / LMG 22485 / NCIMB 9086 / R18194 / 383)).